A 722-amino-acid chain; its full sequence is Endoglucanase F (722 aa).

The N-terminal stretch at 1–29 (MSKNFKRVGAVAVAAAMSLSIMATTSINA) is a signal peptide. The segment at 142–165 (PEFQDPSKYPSPLDTSQPVGRDPI) is disordered. Residues 154–165 (LDTSQPVGRDPI) are compositionally biased toward polar residues. Residues 661 to 722 (PEKLLGDVNG…LLKKALLSIQ (62 aa)) enclose the Dockerin domain.

It belongs to the glycosyl hydrolase 48 (cellulase L) family.

The catalysed reaction is Endohydrolysis of (1-&gt;4)-beta-D-glucosidic linkages in cellulose, lichenin and cereal beta-D-glucans.. In terms of biological role, probable endoglucanase involved in the degradation of cellulose or related beta-glucans. In Ruminiclostridium cellulolyticum (strain ATCC 35319 / DSM 5812 / JCM 6584 / H10) (Clostridium cellulolyticum), this protein is Endoglucanase F (celCCF).